Here is a 254-residue protein sequence, read N- to C-terminus: Probable pectate lyase E (254 aa).

A signal peptide spans 1–17 (MYQPLLLLPLLLTSAFA). Asn175 is a glycosylation site (N-linked (GlcNAc...) asparagine). Residues 228–254 (DNNKKEPAKKSSGPSNACKYKEPLASC) form a disordered region.

This sequence belongs to the polysaccharide lyase 3 family. It depends on Ca(2+) as a cofactor.

It localises to the secreted. It carries out the reaction Eliminative cleavage of (1-&gt;4)-alpha-D-galacturonan to give oligosaccharides with 4-deoxy-alpha-D-galact-4-enuronosyl groups at their non-reducing ends.. Pectinolytic enzyme consist of four classes of enzymes: pectin lyase, polygalacturonase, pectin methylesterase and rhamnogalacturonase. Among pectinolytic enzymes, pectin lyase is the most important in depolymerization of pectin, since it cleaves internal glycosidic bonds of highly methylated pectins. Favors pectate, the anion, over pectin, the methyl ester. The sequence is that of Probable pectate lyase E (plyE) from Aspergillus fumigatus (strain ATCC MYA-4609 / CBS 101355 / FGSC A1100 / Af293) (Neosartorya fumigata).